A 240-amino-acid polypeptide reads, in one-letter code: Uridylate kinase (240 aa).

Position 13 to 16 (13 to 16) interacts with ATP; it reads KASG. The segment at 21–26 is involved in allosteric activation by GTP; the sequence is GAQGFG. Gly55 lines the UMP pocket. Positions 56 and 60 each coordinate ATP. Residues Asp75 and 136 to 143 each bind UMP; that span reads TGNPFFTT. ATP-binding residues include Thr163, Gln164, Tyr169, and Asp172.

Belongs to the UMP kinase family. Homohexamer.

It is found in the cytoplasm. It catalyses the reaction UMP + ATP = UDP + ADP. Its pathway is pyrimidine metabolism; CTP biosynthesis via de novo pathway; UDP from UMP (UMPK route): step 1/1. Allosterically activated by GTP. Inhibited by UTP. Catalyzes the reversible phosphorylation of UMP to UDP. This chain is Uridylate kinase, found in Rhizobium etli (strain ATCC 51251 / DSM 11541 / JCM 21823 / NBRC 15573 / CFN 42).